We begin with the raw amino-acid sequence, 283 residues long: ATP phosphoribosyltransferase (283 aa).

It belongs to the ATP phosphoribosyltransferase family. Long subfamily. The cofactor is Mg(2+).

It localises to the cytoplasm. It catalyses the reaction 1-(5-phospho-beta-D-ribosyl)-ATP + diphosphate = 5-phospho-alpha-D-ribose 1-diphosphate + ATP. The protein operates within amino-acid biosynthesis; L-histidine biosynthesis; L-histidine from 5-phospho-alpha-D-ribose 1-diphosphate: step 1/9. Its activity is regulated as follows. Feedback inhibited by histidine. In terms of biological role, catalyzes the condensation of ATP and 5-phosphoribose 1-diphosphate to form N'-(5'-phosphoribosyl)-ATP (PR-ATP). Has a crucial role in the pathway because the rate of histidine biosynthesis seems to be controlled primarily by regulation of HisG enzymatic activity. The protein is ATP phosphoribosyltransferase of Phocaeicola vulgatus (strain ATCC 8482 / DSM 1447 / JCM 5826 / CCUG 4940 / NBRC 14291 / NCTC 11154) (Bacteroides vulgatus).